The following is a 294-amino-acid chain: Indole-3-glycerol phosphate synthase (294 aa).

Belongs to the TrpC family.

It catalyses the reaction 1-(2-carboxyphenylamino)-1-deoxy-D-ribulose 5-phosphate + H(+) = (1S,2R)-1-C-(indol-3-yl)glycerol 3-phosphate + CO2 + H2O. It functions in the pathway amino-acid biosynthesis; L-tryptophan biosynthesis; L-tryptophan from chorismate: step 4/5. This chain is Indole-3-glycerol phosphate synthase, found in Crocosphaera subtropica (strain ATCC 51142 / BH68) (Cyanothece sp. (strain ATCC 51142)).